The primary structure comprises 434 residues: ATP-dependent protease ATPase subunit HslU (434 aa).

Residues Val18, 60 to 65 (GVGKTE), Asp247, Glu312, and Arg384 each bind ATP.

The protein belongs to the ClpX chaperone family. HslU subfamily. As to quaternary structure, a double ring-shaped homohexamer of HslV is capped on each side by a ring-shaped HslU homohexamer. The assembly of the HslU/HslV complex is dependent on binding of ATP.

The protein localises to the cytoplasm. Its function is as follows. ATPase subunit of a proteasome-like degradation complex; this subunit has chaperone activity. The binding of ATP and its subsequent hydrolysis by HslU are essential for unfolding of protein substrates subsequently hydrolyzed by HslV. HslU recognizes the N-terminal part of its protein substrates and unfolds these before they are guided to HslV for hydrolysis. The polypeptide is ATP-dependent protease ATPase subunit HslU (Bradyrhizobium diazoefficiens (strain JCM 10833 / BCRC 13528 / IAM 13628 / NBRC 14792 / USDA 110)).